Consider the following 388-residue polypeptide: MNLHEYQAKQLFAEYGLPVPEGYACDTAQEAFEAAGRISTAKKVVKCQVHAGGRGKAGGVELHDTKEGVKEFAQKWLGKNLVTFQTDAKGQPVTKVLVEEASNIANELYLGAVVDRATRRIVFMASTEGGVDIEKIAEETPELIHQAAIDPLVGPQAFQGRELAFKLGLEGDQIKQFVKIFLGLGNMFAQYDLALLEINPLVVTAEGNLLCLDGKINIDSNAMYRQPKLREMHDPSQEDEREAHAAQWELNYVALDGSIGCMVNGAGLAMGTMDIVNLHGGQPANFLDVGGGATKERVTEAFKIILSDSNVKAVLVNIFGGIVRCDLIADGIIGAVEEVGVKVPVVVRLEGNNAPLGSQKLAESGLNIIAATSLTEAAEKVVAAAEGK.

Positions 9–244 (KQLFAEYGLP…PSQEDEREAH (236 aa)) constitute an ATP-grasp domain. ATP contacts are provided by residues Lys-46, 53–55 (GRG), Glu-99, Ser-102, and Glu-107. Residues Asn-199 and Asp-213 each coordinate Mg(2+). Substrate contacts are provided by residues Asn-264 and 321-323 (GIV).

It belongs to the succinate/malate CoA ligase beta subunit family. In terms of assembly, heterotetramer of two alpha and two beta subunits. Mg(2+) serves as cofactor.

The enzyme catalyses succinate + ATP + CoA = succinyl-CoA + ADP + phosphate. It carries out the reaction GTP + succinate + CoA = succinyl-CoA + GDP + phosphate. It functions in the pathway carbohydrate metabolism; tricarboxylic acid cycle; succinate from succinyl-CoA (ligase route): step 1/1. In terms of biological role, succinyl-CoA synthetase functions in the citric acid cycle (TCA), coupling the hydrolysis of succinyl-CoA to the synthesis of either ATP or GTP and thus represents the only step of substrate-level phosphorylation in the TCA. The beta subunit provides nucleotide specificity of the enzyme and binds the substrate succinate, while the binding sites for coenzyme A and phosphate are found in the alpha subunit. This chain is Succinate--CoA ligase [ADP-forming] subunit beta, found in Aliivibrio salmonicida (strain LFI1238) (Vibrio salmonicida (strain LFI1238)).